The following is a 130-amino-acid chain: Small ribosomal subunit protein uS9 (130 aa).

The segment at 105-130 is disordered; it reads TRDSRMVERKKPGLKKARRASQFSKR. Residues 106–115 show a composition bias toward basic and acidic residues; that stretch reads RDSRMVERKK. The segment covering 116–130 has biased composition (basic residues); that stretch reads PGLKKARRASQFSKR.

This sequence belongs to the universal ribosomal protein uS9 family.

In Oenococcus oeni (strain ATCC BAA-331 / PSU-1), this protein is Small ribosomal subunit protein uS9.